Reading from the N-terminus, the 80-residue chain is WAP four-disulfide core domain protein 15A (80 aa).

An N-terminal signal peptide occupies residues 1-20; that stretch reads MKPSSLLLFTTTILLCLSMA. The 48-residue stretch at 29 to 76 folds into the WAP domain; sequence VTPKQGYCPEFLLDCPFVLLPVCSRDKGCKGTKKCCFYYCQMRCVEPW. Cystine bridges form between Cys-36–Cys-64, Cys-43–Cys-68, Cys-51–Cys-63, and Cys-57–Cys-72.

The protein resides in the secreted. Its function is as follows. Antibacterial protein. The polypeptide is WAP four-disulfide core domain protein 15A (Mus musculus (Mouse)).